Here is a 437-residue protein sequence, read N- to C-terminus: Protein translocase subunit SecY (437 aa).

10 helical membrane passes run 19–39 (LFTLAIIVVYRVGTHIPIPGV), 69–89 (LLQITIFALGIMPYITASIIL), 122–142 (VALAILQGTGLVATARSAPLF), 157–177 (IFTTITMVICMTAGTCVVMWL), 189–209 (GMSILMFISIAATFPSALWAI), 219–239 (WIEFGTVIAVGLIMVALVVFV), 276–296 (VIPVIFASSLLYIPALVAQFA), 316–336 (PIYIVTYFLLIVFFAFFYVAI), 378–398 (GSLYLGLIALVPTMALVGFGA), and 400–420 (QNFPFGGTSILIIVGVGLETV).

It belongs to the SecY/SEC61-alpha family. As to quaternary structure, component of the Sec protein translocase complex. Heterotrimer consisting of SecY, SecE and SecG subunits. The heterotrimers can form oligomers, although 1 heterotrimer is thought to be able to translocate proteins. Interacts with the ribosome. Interacts with SecDF, and other proteins may be involved. Interacts with SecA.

The protein localises to the cell membrane. Its function is as follows. The central subunit of the protein translocation channel SecYEG. Consists of two halves formed by TMs 1-5 and 6-10. These two domains form a lateral gate at the front which open onto the bilayer between TMs 2 and 7, and are clamped together by SecE at the back. The channel is closed by both a pore ring composed of hydrophobic SecY resides and a short helix (helix 2A) on the extracellular side of the membrane which forms a plug. The plug probably moves laterally to allow the channel to open. The ring and the pore may move independently. In Streptomyces galbus, this protein is Protein translocase subunit SecY.